Here is a 188-residue protein sequence, read N- to C-terminus: uncharacterized protein (188 aa).

The N-terminal stretch at 1–23 (MFKGQKTLAALAVSLLFTAPVYA) is a signal peptide. The cysteines at positions 42 and 81 are disulfide-linked.

Belongs to the fimbrial protein family.

It localises to the fimbrium. This is an uncharacterized protein from Escherichia coli (strain K12).